The following is a 75-amino-acid chain: UPF0352 protein ESA_01049 (75 aa).

This sequence belongs to the UPF0352 family.

This Cronobacter sakazakii (strain ATCC BAA-894) (Enterobacter sakazakii) protein is UPF0352 protein ESA_01049.